A 221-amino-acid chain; its full sequence is UPF0328 protein ECU11_2110 (221 aa).

Belongs to the UPF0328 family.

The sequence is that of UPF0328 protein ECU11_2110 from Encephalitozoon cuniculi (strain GB-M1) (Microsporidian parasite).